A 202-amino-acid polypeptide reads, in one-letter code: Mitochondrial import receptor subunit TOM20-3 (202 aa).

Residue M1 is modified to N-acetylmethionine. Residues 1–174 (MDTETEFDRI…NKKSSDAKYD (174 aa)) lie on the Cytoplasmic side of the membrane. TPR repeat units lie at residues 38-74 (GGVL…DPKK) and 86-119 (TSFA…QPDN). Residues 146–166 (SQPMGRVEAPAPPSSKAVKNK) form a disordered region. A helical membrane pass occupies residues 175-192 (AMGWVILAIGVVAWISFA). The Mitochondrial intermembrane segment spans residues 193–202 (KANVPVSPPR).

Belongs to the Tom20 family. In terms of assembly, forms part of the preprotein translocase complex of the outer mitochondrial membrane (TOM complex) which consists of at least 6 different proteins (TOM5, TOM6, TOM7, TOM20, TOM22/TOM9 and TOM40). Component of a mitochondrial large protein complex that contains, at least, MIC60, DGS1, TOM40, TOM20 proteins, and petC/RISP. In terms of processing, the N-terminus is blocked. Expressed in roots, flowers, young cotyledons and leaves.

The protein resides in the mitochondrion outer membrane. Functionally, central component of the receptor complex responsible for the recognition and translocation of cytosolically synthesized mitochondrial preproteins. Together with TOM22 functions as the transit peptide receptor at the surface of the mitochondrion outer membrane and facilitates the movement of preproteins into the translocation pore. The protein is Mitochondrial import receptor subunit TOM20-3 of Arabidopsis thaliana (Mouse-ear cress).